We begin with the raw amino-acid sequence, 400 residues long: Apolipoprotein N-acyltransferase (400 aa).

A run of 5 helical transmembrane segments spans residues 16 to 36 (AISP…VLFV), 42 to 62 (FGVG…GLRY), 67 to 87 (FLIP…FYIG), 97 to 117 (FAFL…IVPE), and 123 to 143 (SYIG…WILF). Residues 181–400 (AQSAVSQDFD…AIITPFVSSR (220 aa)) enclose the CN hydrolase domain. The active-site Proton acceptor is Glu222. Lys283 is a catalytic residue. Catalysis depends on Cys332, which acts as the Nucleophile. The chain crosses the membrane as a helical span at residues 377–397 (YGSVIFHATNLSPAAIITPFV).

The protein belongs to the CN hydrolase family. Apolipoprotein N-acyltransferase subfamily.

Its subcellular location is the cell inner membrane. The enzyme catalyses N-terminal S-1,2-diacyl-sn-glyceryl-L-cysteinyl-[lipoprotein] + a glycerophospholipid = N-acyl-S-1,2-diacyl-sn-glyceryl-L-cysteinyl-[lipoprotein] + a 2-acyl-sn-glycero-3-phospholipid + H(+). Its pathway is protein modification; lipoprotein biosynthesis (N-acyl transfer). In terms of biological role, catalyzes the phospholipid dependent N-acylation of the N-terminal cysteine of apolipoprotein, the last step in lipoprotein maturation. The protein is Apolipoprotein N-acyltransferase of Helicobacter hepaticus (strain ATCC 51449 / 3B1).